Consider the following 509-residue polypeptide: Subtelomeric hrmA-associated cluster protein AFUB_078990 (509 aa).

Functionally, part of the subtelomeric hrmA-associated cluster (HAC) containing genes that alter the hyphal surface (such as reduced total chitin or increased beta-glucan exposure) and perturb inter-hyphal interactions within the developing biofilms, resulting in a loss of vertically aligned polarized growing filaments. Consequently, this hypoxia-typic morphotype (called H-MORPH) with altered biofilm architecture leads to increased hypoxia fitness, increased host inflammation, rapid disease progression, and mortality in a murine model of invasive aspergillosis. This Aspergillus fumigatus (strain CBS 144.89 / FGSC A1163 / CEA10) (Neosartorya fumigata) protein is Subtelomeric hrmA-associated cluster protein AFUB_078990.